A 330-amino-acid chain; its full sequence is Putative zinc finger protein CONSTANS-LIKE 11 (330 aa).

Residues C5, C8, C28, and H33 each contribute to the Zn(2+) site. A B box-type 1; atypical zinc finger spans residues 5 to 47 (CDFCGTEKALIYCKSDSAKLCLNCDVNVHSANPLSQRHTRSLL). A B box-type 2; degenerate zinc finger spans residues 48–88 (CEKCSLQPTAVHCMNENVSLCQGCQWTASNCTGLGHRLQSL). The region spanning 276 to 318 (RDEAKKRYKQKKSKRMFGKQIRYASRKARADTRKRVKGRFVKS) is the CCT domain.

Belongs to the CONSTANS family.

Its subcellular location is the nucleus. The polypeptide is Putative zinc finger protein CONSTANS-LIKE 11 (COL11) (Arabidopsis thaliana (Mouse-ear cress)).